Here is a 1622-residue protein sequence, read N- to C-terminus: MAMQSLSPVPKLLSTTPSSVLSSDKNFFFVDFVGLYCKSKRTRRRLRGDSSSSSRSSSSLSRLSSVRAVIDLERVHGVSEKDLSSPSALRPQVANLEDILSERGACGVGFIANLDNIPSHGVVKDALIALGCMEHRGGCGADNDSGDGSGLMSSIPWDFFNVWAKEQSLAPFDKLHTGVGMIFLPQDDTFMQEAKQVIENIFEKEGLQVLGWREVPVNVPIVGKNARETMPNIQQVFVKIAKEDSTDDIERELYICRKLIERAVATESWGTELYFCSLSNQTIVYKGMLRSEALGLFYLDLQNELYESPFAIYHRRYSTNTSPRWPLAQPMRFLGHNGEINTIQGNLNWMQSREASLKAAVWNGRENEIRPFGNPRGSDSANLDSAAEIMIRSGRTPEEALMILVPEAYKNHPTLSVKYPEVVDFYDYYKGQMEAWDGPALLLFSDGKTVGACLDRNGLRPARYWRTSDNFVYVASEVGVVPVDEAKVTMKGRLGPGMMIAVDLVNGQVYENTEVKKRISSFNPYGKWIKENSRFLKPVNFKSSTVMENEEILRSQQAFGYSSEDVQMVIESMASQGKEPTFCMGDDIPLAGLSQRPHMLYDYFKQRFAQVTNPAIDPLREGLVMSLEVNIGKRGNILELGPENASQVILSNPVLNEGALEELMKDQYLKPKVLSTYFDIRKGVEGSLQKALYYLCEAADDAVRSGSQLLVLSDRSDRLEPTRPSIPIMLAVGAVHQHLIQNGLRMSASIVADTAQCFSTHHFACLVGYGASAVCPYLALETCRQWRLSNKTVAFMRNGKIPTVTIEQAQKNYTKAVNAGLLKILSKMGISLLSSYCGAQIFEIYGLGQDVVDLAFTGSVSKISGLTFDELARETLSFWVKAFSEDTTKRLENFGFIQFRPGGEYHSNNPEMSKLLHKAVREKSETAYAVYQQHLSNRPVNVLRDLLEFKSDRAPIPVGKVEPAVAIVQRFCTGGMSLGAISRETHEAIAIAMNRIGGKSNSGEGGEDPIRWKPLTDVVDGYSPTLPHLKGLQNGDIATSAIKQVASGRFGVTPTFLVNADQLEIKVAQGAKPGEGGQLPGKKVSAYIARLRSSKPGVPLISPPPHHDIYSIEDLAQLIFDLHQINPNAKVSVKLVAEAGIGTVASGVAKGNADIIQISGHDGGTGASPISSIKHAGGPWELGLTETHQTLIANGLRERVILRVDGGLKSGVDVLMAAAMGADEYGFGSLAMIATGCVMARICHTNNCPVGVASQREELRARFPGVPGDLVNYFLYVAEEVRGILAQLGYNSLDDIIGRTELLRPRDISLVKTQHLDLSYLLSSVGTPSLSSTEIRKQEVHTNGPVLDDDILADPLVIDAIENEKVVEKTVKICNVDRAACGRVAGVIAKKYGDTGFAGQVNLTFLGSAGQSFGCFLIPGMNIRLIGESNDYVGKGMAGGEIVVTPVEKIGFVPEEATIVGNTCLYGATGGQIFARGKAGERFAVRNSLAEAVVEGTGDHCCEYMTGGCVVVLGKVGRNVAAGMTGGLAYLLDEDDTLLPKINREIVKIQRVTAPAGELQLKSLIEAHVEKTGSSKGATILNEWEKYLPLFWQLVPPSEEDTPEASAAYVRTSTGEVTFQSA.

A chloroplast and mitochondrion-targeting transit peptide spans M1 to A105. The active-site For GATase activity is the C106. A Glutamine amidotransferase type-2 domain is found at C106–V505. L1184 to R1241 provides a ligand contact to FMN. [3Fe-4S] cluster contacts are provided by C1237, C1243, and C1248.

The protein belongs to the glutamate synthase family. As to quaternary structure, interacts with SHM1. Requires [3Fe-4S] cluster as cofactor. It depends on FAD as a cofactor. FMN serves as cofactor. As to expression, highly expressed in leaves. High expression in the leaf mesophyll and phloem companion cell-sieve element complex.

The protein localises to the plastid. It is found in the chloroplast stroma. It localises to the mitochondrion matrix. The catalysed reaction is 2 oxidized [2Fe-2S]-[ferredoxin] + 2 L-glutamate = L-glutamine + 2 reduced [2Fe-2S]-[ferredoxin] + 2-oxoglutarate + 2 H(+). It functions in the pathway amino-acid biosynthesis; L-glutamate biosynthesis via GLT pathway; L-glutamate from 2-oxoglutarate and L-glutamine (ferredoxin route): step 1/1. Its pathway is energy metabolism; nitrogen metabolism. Functionally, involved in glutamate biosynthesis in leaf. Required for the reassimilation of ammonium ions generated during photorespiration. The polypeptide is Ferredoxin-dependent glutamate synthase 1, chloroplastic/mitochondrial (Arabidopsis thaliana (Mouse-ear cress)).